A 221-amino-acid polypeptide reads, in one-letter code: Type II secretion system protein J (221 aa).

A propeptide spans 1–15 (MWRTNQVSSRQNMAG) (leader sequence). Residue phenylalanine 16 is modified to N-methylphenylalanine. A helical membrane pass occupies residues 16–36 (FTLIEVLVAIAIFASLSVGAY).

The protein belongs to the GSP J family. As to quaternary structure, type II secretion is composed of four main components: the outer membrane complex, the inner membrane complex, the cytoplasmic secretion ATPase and the periplasm-spanning pseudopilus. Interacts with core component epsG. Cleaved by prepilin peptidase. In terms of processing, methylated by prepilin peptidase at the amino group of the N-terminal phenylalanine once the leader sequence is cleaved by prepilin peptidase.

It is found in the cell inner membrane. In terms of biological role, component of the type II secretion system required for the energy-dependent secretion of extracellular factors such as proteases and toxins from the periplasm. Part of the pseudopilus tip complex that is critical for the recognition and binding of secretion substrates. The sequence is that of Type II secretion system protein J (epsJ) from Vibrio cholerae serotype O1 (strain ATCC 39315 / El Tor Inaba N16961).